We begin with the raw amino-acid sequence, 366 residues long: 3-dehydroquinate synthase (366 aa).

Residues 69-74, 103-107, 127-128, Lys-140, and Lys-149 contribute to the NAD(+) site; these read DGEAFK, GVIGD, and TT. Positions 182, 245, and 262 each coordinate Zn(2+).

Belongs to the sugar phosphate cyclases superfamily. Dehydroquinate synthase family. Co(2+) is required as a cofactor. Zn(2+) serves as cofactor. It depends on NAD(+) as a cofactor.

It is found in the cytoplasm. It carries out the reaction 7-phospho-2-dehydro-3-deoxy-D-arabino-heptonate = 3-dehydroquinate + phosphate. The protein operates within metabolic intermediate biosynthesis; chorismate biosynthesis; chorismate from D-erythrose 4-phosphate and phosphoenolpyruvate: step 2/7. Functionally, catalyzes the conversion of 3-deoxy-D-arabino-heptulosonate 7-phosphate (DAHP) to dehydroquinate (DHQ). In Pseudomonas fluorescens (strain Pf0-1), this protein is 3-dehydroquinate synthase.